The following is a 329-amino-acid chain: Delta-aminolevulinic acid dehydratase (329 aa).

Zn(2+)-binding residues include C122, C124, and C132. K199 acts as the Schiff-base intermediate with substrate in catalysis. 2 residues coordinate 5-aminolevulinate: R209 and R221. K252 functions as the Schiff-base intermediate with substrate in the catalytic mechanism. 5-aminolevulinate-binding residues include S279 and Y318.

This sequence belongs to the ALAD family. As to quaternary structure, homooctamer. Requires Zn(2+) as cofactor.

It catalyses the reaction 2 5-aminolevulinate = porphobilinogen + 2 H2O + H(+). It participates in porphyrin-containing compound metabolism; protoporphyrin-IX biosynthesis; coproporphyrinogen-III from 5-aminolevulinate: step 1/4. Functionally, catalyzes an early step in the biosynthesis of tetrapyrroles. Binds two molecules of 5-aminolevulinate per subunit, each at a distinct site, and catalyzes their condensation to form porphobilinogen. This is Delta-aminolevulinic acid dehydratase (hem2) from Schizosaccharomyces pombe (strain 972 / ATCC 24843) (Fission yeast).